We begin with the raw amino-acid sequence, 559 residues long: MAAPCGSELPANSPLKIPKMEVLSPASPGDLSDGNPSLSDPSTPRGASPLGPGSAAGSGAAASGGLGLGLGGRGAASSSVSFSPGGGSGGAAAAAAAACRGMSWTPAETNALIAVWGNERLVEARYQQLEGAGTVFGSKAPGPAMYERVSRALAELGYERTPSQCRERIKTLRRCYSRVKEHGVGKRKSSYTFEQLEQVFGQGGWDAQPCQPVLINSSGLYQELESDGSTMEDYSQEDWGNHSQELHGYPTDQELDEMPVSKRTLKIKQESSEEAQKRDTMQNIVQILESVQLKWELFQSWTDFSRLHLSNKLAIFGIGYNTRWKEDIRYHYAEISSQVPLGKRLREYFNSEKPEGRIIMTRVQKMNWKNVYYKFLEITISEARCLELHMEIDWIPIAHSKPTGGNVVQYLLPGGIPKSPGLYAIGYEECIERPLSPDVERHALDPGKEGRVDLETLSAQASLQVEVEPTRIIYCYLGIAEVRTLQQCLFLHFQANAKTFSKEWVGINGFLSQNCIVDPGVSPKSIYIKFVEVERDFLSAGSLVECLEKAIGYPLKFNN.

Residues 1–62 form a disordered region; that stretch reads MAAPCGSELP…GSAAGSGAAA (62 aa). Phosphoserine is present on residues Ser-13, Ser-24, Ser-27, Ser-32, and Ser-48. Residues 46 to 61 show a composition bias toward low complexity; it reads GASPLGPGSAAGSGAA. Residues 103–173 enclose the Myb-like domain; the sequence is SWTPAETNAL…QCRERIKTLR (71 aa). Residues Lys-268 and Lys-343 each participate in a glycyl lysine isopeptide (Lys-Gly) (interchain with G-Cter in SUMO2) cross-link. Phosphoserine is present on Ser-436.

The polypeptide is Myb/SANT-like DNA-binding domain-containing protein 2 (Msantd2) (Mus musculus (Mouse)).